The following is a 640-amino-acid chain: MARGGGAAGVSMAHHLGIALVVLVFAAMAQVARGGGGGHDYGMALSKSILYFEAQRSGVLPGSQRIAWRANSGLADGKANGVDLVGGYYDAGDNVKFGLPMAFTVTMMAWSVIEYGEEMAAAGELGHAVEAIKWGTDYFAKAHPEPNVLYAEVGDGDSDHNCWQRPEDMTTSRQAYRLDPQNPGSDLAGETAAAMAAASLVFRSSNPGYADQLLQHSKQLFDFADKYRGRYDNSITVARNYYGSFSGYGDELLWASAWLYQASDDRRYLDYLANNADALGGTGWSINQFGWDVKYPGVQILAAKFLLQGKAGEHAGVLQGYRRKADFFACSCLGKDAADNVGRTPGGMLYHQRWNNIQFVTSASFLLAVYSDHLAGGAVRCSGGGGAVAGAAELLAFAKSQVDYILGSNPRGTSYMVGYGAVYPRQAHHRGSSIASIRASPSFVSCREGYASWYGRRGGNPNLLDGAVVGGPDEHDDFADERNNYEQTEAATYNNAPLMGILARLAAGHGARARGRLGQSLQHGIAANHTSLPHGANHQHASPVEIEQKATASWEKDGRTYHRYAVTVSNRSPAGGKTVEELHIGIGKLYGPVWGLEKAARYGYVLPSWTPSLPAGESAAFVYVHAAPPADVWVTGYKLV.

A signal peptide spans 1 to 34 (MARGGGAAGVSMAHHLGIALVVLVFAAMAQVARG). Asp-93 acts as the Nucleophile in catalysis. Active-site residues include His-428, Asp-480, and Glu-489. A propeptide spans 512-640 (RARGRLGQSL…DVWVTGYKLV (129 aa)) (removed in mature form). A glycan (N-linked (GlcNAc...) asparagine) is linked at Asn-528.

It belongs to the glycosyl hydrolase 9 (cellulase E) family. As to expression, expressed in roots and flowers.

The protein resides in the secreted. It catalyses the reaction Endohydrolysis of (1-&gt;4)-beta-D-glucosidic linkages in cellulose, lichenin and cereal beta-D-glucans.. Its function is as follows. Hydrolyzes 1,4-beta-glycosyl linkages of 1,4-beta-glucans and 1,3-1,4-beta-glucans. Possesses broad substrate specificity for hemicelluloses of type II cell walls. Substrate preference is carboxymethyl-cellulose &gt; 1,3-1,4-beta-glucan &gt; lichenan &gt; arabinoxylan &gt; phospho-swollen cellulose &gt; xylan &gt; glucomannan. May participate in lateral root development. The protein is Endoglucanase 2 (GLU5) of Oryza sativa subsp. japonica (Rice).